Consider the following 141-residue polypeptide: MAKKVIKMVKLQIPAGKANPAPPVGPALGQAGVNIMGFCKEFNARTSDQAGLIIPVEITVFEDRSFTFITKTPPAAVLLKKAAGIDSGSGEPNRTKVATVKRDKVREIAETKMPDLNAASVEAAMRMVEGTARSMGIVIED.

This sequence belongs to the universal ribosomal protein uL11 family. Part of the ribosomal stalk of the 50S ribosomal subunit. Interacts with L10 and the large rRNA to form the base of the stalk. L10 forms an elongated spine to which L12 dimers bind in a sequential fashion forming a multimeric L10(L12)X complex. One or more lysine residues are methylated.

Forms part of the ribosomal stalk which helps the ribosome interact with GTP-bound translation factors. The polypeptide is Large ribosomal subunit protein uL11 (Shouchella clausii (strain KSM-K16) (Alkalihalobacillus clausii)).